A 205-amino-acid polypeptide reads, in one-letter code: MEINYELYLITDRRFLKGRQLKKVVEDAILGGVTIVQVREKDVSTREFYNVAKEVKEVTDYYKVPIIINDRLDIAQAIDASGVHLGQKDMHLNIAREILGKDKIIGISVGNVKEALEAQNNGADYLGIGTIFPTGSKKDVDAIIGIDGLSKIKDSISIPSVAIGGINKTNFKDVLKTGIEGISVISAILDEDDIKLAANNLLINK.

4-amino-2-methyl-5-(diphosphooxymethyl)pyrimidine contacts are provided by residues 37 to 41 (QVREK) and Asn69. Mg(2+)-binding residues include Asp70 and Asp89. Residue Ser108 participates in 4-amino-2-methyl-5-(diphosphooxymethyl)pyrimidine binding. 134–136 (TGS) is a 2-[(2R,5Z)-2-carboxy-4-methylthiazol-5(2H)-ylidene]ethyl phosphate binding site. Lys137 contacts 4-amino-2-methyl-5-(diphosphooxymethyl)pyrimidine. 2-[(2R,5Z)-2-carboxy-4-methylthiazol-5(2H)-ylidene]ethyl phosphate is bound by residues Gly165 and 185–186 (IS).

This sequence belongs to the thiamine-phosphate synthase family. Mg(2+) is required as a cofactor.

The catalysed reaction is 2-[(2R,5Z)-2-carboxy-4-methylthiazol-5(2H)-ylidene]ethyl phosphate + 4-amino-2-methyl-5-(diphosphooxymethyl)pyrimidine + 2 H(+) = thiamine phosphate + CO2 + diphosphate. It carries out the reaction 2-(2-carboxy-4-methylthiazol-5-yl)ethyl phosphate + 4-amino-2-methyl-5-(diphosphooxymethyl)pyrimidine + 2 H(+) = thiamine phosphate + CO2 + diphosphate. It catalyses the reaction 4-methyl-5-(2-phosphooxyethyl)-thiazole + 4-amino-2-methyl-5-(diphosphooxymethyl)pyrimidine + H(+) = thiamine phosphate + diphosphate. Its pathway is cofactor biosynthesis; thiamine diphosphate biosynthesis; thiamine phosphate from 4-amino-2-methyl-5-diphosphomethylpyrimidine and 4-methyl-5-(2-phosphoethyl)-thiazole: step 1/1. Functionally, condenses 4-methyl-5-(beta-hydroxyethyl)thiazole monophosphate (THZ-P) and 2-methyl-4-amino-5-hydroxymethyl pyrimidine pyrophosphate (HMP-PP) to form thiamine monophosphate (TMP). This Clostridium botulinum (strain Langeland / NCTC 10281 / Type F) protein is Thiamine-phosphate synthase.